The following is a 179-amino-acid chain: uncharacterized protein (179 aa).

Helical transmembrane passes span L29–I49, A76–S96, and G97–A117.

The protein belongs to the DP1 family.

It is found in the membrane. This is an uncharacterized protein from Encephalitozoon cuniculi (strain GB-M1) (Microsporidian parasite).